The sequence spans 250 residues: Pyridoxine 5'-phosphate synthase (250 aa).

3-amino-2-oxopropyl phosphate contacts are provided by asparagine 8 and arginine 19. Catalysis depends on histidine 44, which acts as the Proton acceptor. Residues arginine 46 and histidine 51 each contribute to the 1-deoxy-D-xylulose 5-phosphate site. Glutamate 76 serves as the catalytic Proton acceptor. Threonine 106 contributes to the 1-deoxy-D-xylulose 5-phosphate binding site. The active-site Proton donor is histidine 200. 3-amino-2-oxopropyl phosphate contacts are provided by residues aspartate 201 and 223–224; that span reads GH.

This sequence belongs to the PNP synthase family. In terms of assembly, homooctamer; tetramer of dimers.

Its subcellular location is the cytoplasm. It catalyses the reaction 3-amino-2-oxopropyl phosphate + 1-deoxy-D-xylulose 5-phosphate = pyridoxine 5'-phosphate + phosphate + 2 H2O + H(+). The protein operates within cofactor biosynthesis; pyridoxine 5'-phosphate biosynthesis; pyridoxine 5'-phosphate from D-erythrose 4-phosphate: step 5/5. Functionally, catalyzes the complicated ring closure reaction between the two acyclic compounds 1-deoxy-D-xylulose-5-phosphate (DXP) and 3-amino-2-oxopropyl phosphate (1-amino-acetone-3-phosphate or AAP) to form pyridoxine 5'-phosphate (PNP) and inorganic phosphate. This is Pyridoxine 5'-phosphate synthase from Allorhizobium ampelinum (strain ATCC BAA-846 / DSM 112012 / S4) (Agrobacterium vitis (strain S4)).